The sequence spans 168 residues: Endoribonuclease YbeY (168 aa).

Zn(2+) is bound by residues His123, His127, and His133.

The protein belongs to the endoribonuclease YbeY family. Requires Zn(2+) as cofactor.

The protein resides in the cytoplasm. In terms of biological role, single strand-specific metallo-endoribonuclease involved in late-stage 70S ribosome quality control and in maturation of the 3' terminus of the 16S rRNA. The chain is Endoribonuclease YbeY from Francisella tularensis subsp. tularensis (strain SCHU S4 / Schu 4).